A 456-amino-acid chain; its full sequence is tRNA modification GTPase MnmE (456 aa).

(6S)-5-formyl-5,6,7,8-tetrahydrofolate contacts are provided by Arg24, Glu81, and Lys120. Residues 216 to 379 (GMTVVIAGRP…LRDHLKACMG (164 aa)) enclose the TrmE-type G domain. Asn226 is a binding site for K(+). Residues 226–231 (NAGKSS), 245–251 (TDIAGTT), 270–273 (DTAG), and 335–338 (NKAD) each bind GTP. A Mg(2+)-binding site is contributed by Ser230. K(+) is bound by residues Thr245, Ile247, and Thr250. Residue Thr251 coordinates Mg(2+). Lys456 serves as a coordination point for (6S)-5-formyl-5,6,7,8-tetrahydrofolate.

Belongs to the TRAFAC class TrmE-Era-EngA-EngB-Septin-like GTPase superfamily. TrmE GTPase family. Homodimer. Heterotetramer of two MnmE and two MnmG subunits. K(+) serves as cofactor.

It is found in the cytoplasm. Its function is as follows. Exhibits a very high intrinsic GTPase hydrolysis rate. Involved in the addition of a carboxymethylaminomethyl (cmnm) group at the wobble position (U34) of certain tRNAs, forming tRNA-cmnm(5)s(2)U34. The sequence is that of tRNA modification GTPase MnmE from Pseudomonas putida (strain GB-1).